We begin with the raw amino-acid sequence, 381 residues long: Chorismate synthase (381 aa).

R41 and R47 together coordinate NADP(+). FMN is bound by residues 127–129, 247–248, G291, 306–310, and R332; these read RAS, QA, and KPIPT.

It belongs to the chorismate synthase family. In terms of assembly, homotetramer. FMNH2 serves as cofactor.

The enzyme catalyses 5-O-(1-carboxyvinyl)-3-phosphoshikimate = chorismate + phosphate. The protein operates within metabolic intermediate biosynthesis; chorismate biosynthesis; chorismate from D-erythrose 4-phosphate and phosphoenolpyruvate: step 7/7. Catalyzes the anti-1,4-elimination of the C-3 phosphate and the C-6 proR hydrogen from 5-enolpyruvylshikimate-3-phosphate (EPSP) to yield chorismate, which is the branch point compound that serves as the starting substrate for the three terminal pathways of aromatic amino acid biosynthesis. This reaction introduces a second double bond into the aromatic ring system. This chain is Chorismate synthase, found in Anaeromyxobacter dehalogenans (strain 2CP-1 / ATCC BAA-258).